A 225-amino-acid chain; its full sequence is MNSIKFPVLDRTTKNSVISTTLNDLSNWSRLSSLWPLLYGTSCCFIEFASLIGSRFDFDRYGLVPRSSPRQADLILTAGTVTMKMAPSLVRLYEQMPEPKYVIAMGACTITGGMFSTDSYSTVRGVDKLIPVDVYLPGCPPKPEAVIDAITKLRKKIAREIYKDQIRPQQGNRCFTTTHKFFVVRSTHTGNYDQELLYPPSSTSEISTETFFKYKSPVSSHELVN.

4 residues coordinate [4Fe-4S] cluster: Cys43, Cys44, Cys108, and Cys139.

It belongs to the complex I 20 kDa subunit family. In terms of assembly, NDH is composed of at least 16 different subunits, 5 of which are encoded in the nucleus. [4Fe-4S] cluster is required as a cofactor.

It localises to the plastid. Its subcellular location is the chloroplast thylakoid membrane. The enzyme catalyses a plastoquinone + NADH + (n+1) H(+)(in) = a plastoquinol + NAD(+) + n H(+)(out). It catalyses the reaction a plastoquinone + NADPH + (n+1) H(+)(in) = a plastoquinol + NADP(+) + n H(+)(out). In terms of biological role, NDH shuttles electrons from NAD(P)H:plastoquinone, via FMN and iron-sulfur (Fe-S) centers, to quinones in the photosynthetic chain and possibly in a chloroplast respiratory chain. The immediate electron acceptor for the enzyme in this species is believed to be plastoquinone. Couples the redox reaction to proton translocation, and thus conserves the redox energy in a proton gradient. The sequence is that of NAD(P)H-quinone oxidoreductase subunit K, chloroplastic from Arabis hirsuta (Hairy rock-cress).